Consider the following 174-residue polypeptide: Large ribosomal subunit protein uL10 (174 aa).

This sequence belongs to the universal ribosomal protein uL10 family. As to quaternary structure, part of the ribosomal stalk of the 50S ribosomal subunit. The N-terminus interacts with L11 and the large rRNA to form the base of the stalk. The C-terminus forms an elongated spine to which L12 dimers bind in a sequential fashion forming a multimeric L10(L12)X complex.

Forms part of the ribosomal stalk, playing a central role in the interaction of the ribosome with GTP-bound translation factors. The protein is Large ribosomal subunit protein uL10 of Geobacter sulfurreducens (strain ATCC 51573 / DSM 12127 / PCA).